The sequence spans 152 residues: D-aminoacyl-tRNA deacylase (152 aa).

Residues 142-143 (GP) carry the Gly-cisPro motif, important for rejection of L-amino acids motif.

It belongs to the DTD family. Homodimer.

It is found in the cytoplasm. It catalyses the reaction glycyl-tRNA(Ala) + H2O = tRNA(Ala) + glycine + H(+). It carries out the reaction a D-aminoacyl-tRNA + H2O = a tRNA + a D-alpha-amino acid + H(+). Its function is as follows. An aminoacyl-tRNA editing enzyme that deacylates mischarged D-aminoacyl-tRNAs. Also deacylates mischarged glycyl-tRNA(Ala), protecting cells against glycine mischarging by AlaRS. Acts via tRNA-based rather than protein-based catalysis; rejects L-amino acids rather than detecting D-amino acids in the active site. By recycling D-aminoacyl-tRNA to D-amino acids and free tRNA molecules, this enzyme counteracts the toxicity associated with the formation of D-aminoacyl-tRNA entities in vivo and helps enforce protein L-homochirality. The polypeptide is D-aminoacyl-tRNA deacylase (Burkholderia lata (strain ATCC 17760 / DSM 23089 / LMG 22485 / NCIMB 9086 / R18194 / 383)).